We begin with the raw amino-acid sequence, 100 residues long: NADH-quinone oxidoreductase subunit K (100 aa).

The next 3 membrane-spanning stretches (helical) occupy residues 2 to 22 (IPLSWYMALATVLFCIGVAGF), 28 to 48 (IIVMLLSLELMLNGVNLNLVA), and 64 to 84 (FVITVAACEAAVGLGIVICLF).

The protein belongs to the complex I subunit 4L family. In terms of assembly, NDH-1 is composed of 14 different subunits. Subunits NuoA, H, J, K, L, M, N constitute the membrane sector of the complex.

Its subcellular location is the cell inner membrane. The enzyme catalyses a quinone + NADH + 5 H(+)(in) = a quinol + NAD(+) + 4 H(+)(out). Functionally, NDH-1 shuttles electrons from NADH, via FMN and iron-sulfur (Fe-S) centers, to quinones in the respiratory chain. The immediate electron acceptor for the enzyme in this species is believed to be ubiquinone. Couples the redox reaction to proton translocation (for every two electrons transferred, four hydrogen ions are translocated across the cytoplasmic membrane), and thus conserves the redox energy in a proton gradient. This Desulfovibrio desulfuricans (strain ATCC 27774 / DSM 6949 / MB) protein is NADH-quinone oxidoreductase subunit K.